The chain runs to 141 residues: Nucleoside diphosphate kinase (141 aa).

6 residues coordinate ATP: K11, F59, R87, T93, R104, and N114. H117 functions as the Pros-phosphohistidine intermediate in the catalytic mechanism.

The protein belongs to the NDK family. Homotetramer. Mg(2+) is required as a cofactor.

It localises to the cytoplasm. The enzyme catalyses a 2'-deoxyribonucleoside 5'-diphosphate + ATP = a 2'-deoxyribonucleoside 5'-triphosphate + ADP. It carries out the reaction a ribonucleoside 5'-diphosphate + ATP = a ribonucleoside 5'-triphosphate + ADP. Functionally, major role in the synthesis of nucleoside triphosphates other than ATP. The ATP gamma phosphate is transferred to the NDP beta phosphate via a ping-pong mechanism, using a phosphorylated active-site intermediate. The polypeptide is Nucleoside diphosphate kinase (Polynucleobacter necessarius subsp. necessarius (strain STIR1)).